A 141-amino-acid chain; its full sequence is Large ribosomal subunit protein uL11 (141 aa).

Belongs to the universal ribosomal protein uL11 family. In terms of assembly, part of the ribosomal stalk of the 50S ribosomal subunit. Interacts with L10 and the large rRNA to form the base of the stalk. L10 forms an elongated spine to which L12 dimers bind in a sequential fashion forming a multimeric L10(L12)X complex. One or more lysine residues are methylated.

Its function is as follows. Forms part of the ribosomal stalk which helps the ribosome interact with GTP-bound translation factors. The protein is Large ribosomal subunit protein uL11 of Syntrophomonas wolfei subsp. wolfei (strain DSM 2245B / Goettingen).